The primary structure comprises 680 residues: Chondroitin proteoglycan 4 (680 aa).

Residues 1 to 18 (MLRVNLLILLCFVPFSLN) form the signal peptide. Residues Asn-42, Asn-59, Asn-72, Asn-167, Asn-205, Asn-458, Asn-472, Asn-486, Asn-498, Asn-526, Asn-527, Asn-556, and Asn-604 are each glycosylated (N-linked (GlcNAc...) asparagine). Residues 460–680 (TKKAETTKKS…PLTTTLHELY (221 aa)) form a disordered region. The span at 484–500 (AANTTAETTKTTSANIT) shows a compositional bias: low complexity. Residues 520-530 (SLDTSGNNSTV) are compositionally biased toward polar residues. Low complexity-rich tracts occupy residues 633–647 (GEAS…SGEV) and 654–669 (SGYS…SSGE). Ser-640 and Ser-644 each carry an O-linked (Xyl...) (chondroitin sulfate) serine glycan. Asn-664 is a glycosylation site (N-linked (GlcNAc...) asparagine).

The protein is Chondroitin proteoglycan 4 (cpg-4) of Caenorhabditis briggsae.